We begin with the raw amino-acid sequence, 184 residues long: MSKLGKKPILIPSGVQINIEGDMISVKGPKGTLSQRLSPYIKVAIEENKLWVQQNEESIVRRSQRKMLRTFQGTYWSLIKNMITGVTEGFEKQLEIVGVGYRAQLQGNKVSLQLGYTHPIVLEPPVGVSVEVPAPNVVVVKGIDKQKVGQFAAEVRSWRKVNVYSGKGVKYRNEVVKLKEGKKA.

This sequence belongs to the universal ribosomal protein uL6 family. Part of the 50S ribosomal subunit.

This protein binds to the 23S rRNA, and is important in its secondary structure. It is located near the subunit interface in the base of the L7/L12 stalk, and near the tRNA binding site of the peptidyltransferase center. This Pseudothermotoga lettingae (strain ATCC BAA-301 / DSM 14385 / NBRC 107922 / TMO) (Thermotoga lettingae) protein is Large ribosomal subunit protein uL6.